We begin with the raw amino-acid sequence, 364 residues long: Mannose-1-phosphate guanylyltransferase catalytic subunit beta (364 aa).

A substrate-binding domain region spans residues 2 to 220 (KALILVGGYG…PGFWMDVGQP (219 aa)). A GDP-alpha-D-mannose-binding site is contributed by aspartate 109. Residue aspartate 109 coordinates Mg(2+). Lysine 160 is an active-site residue. Residue aspartate 216 participates in GDP-alpha-D-mannose binding. Residue aspartate 216 participates in Mg(2+) binding. A hexapeptide repeat domain region spans residues 243-364 (ATGSNIHGTA…VNVPSKDIIM (122 aa)).

Belongs to the transferase hexapeptide repeat family. As to quaternary structure, component of the GMPPA-GMPPB mannose-1-phosphate guanylyltransferase complex composed of 4 GMPPA subunits and 8 tag-335/GMPPB subunits; the complex is organized into three layers, a central layer made up of 2 GMPPA dimers sandwiched between two layers each made up of 2 tag-335/GMPPB dimers. Catalytic activity of tag-335/GMPPB is reduced when part of the complex and binding of GDP-alpha-D-Mannose by GMPPA induces allosteric feedback inhibition of tag-335/GMPPB. Mg(2+) is required as a cofactor.

It carries out the reaction alpha-D-mannose 1-phosphate + GTP + H(+) = GDP-alpha-D-mannose + diphosphate. Its pathway is nucleotide-sugar biosynthesis; GDP-alpha-D-mannose biosynthesis; GDP-alpha-D-mannose from alpha-D-mannose 1-phosphate (GTP route): step 1/1. With respect to regulation, enzyme activity is reduced by incorporation into the GMPPA-GMPPB mannose-1-phosphate guanylyltransferase complex. Allosterically inhibited, when part of the GMPPA-GMPPB complex, by GDP-alpha-D-mannose binding to GMPPA. Catalytic subunit of the GMPPA-GMPPB mannose-1-phosphate guanylyltransferase complex. Catalyzes the formation of GDP-mannose, an essential precursor of glycan moieties of glycoproteins and glycolipids. Can catalyze the reverse reaction in vitro. Together with GMPPA regulates GDP-alpha-D-mannose levels. In Caenorhabditis briggsae, this protein is Mannose-1-phosphate guanylyltransferase catalytic subunit beta.